Here is a 263-residue protein sequence, read N- to C-terminus: 3'-5' ssDNA/RNA exonuclease TatD (263 aa).

A divalent metal cation contacts are provided by Glu-91, His-127, and His-152.

It belongs to the metallo-dependent hydrolases superfamily. TatD-type hydrolase family. TatD subfamily. In terms of assembly, monomer. The cofactor is Mg(2+).

The protein localises to the cytoplasm. Functionally, 3'-5' exonuclease that prefers single-stranded DNA and RNA. May play a role in the H(2)O(2)-induced DNA damage repair. The chain is 3'-5' ssDNA/RNA exonuclease TatD from Klebsiella pneumoniae (strain 342).